A 2419-amino-acid chain; its full sequence is Telomere-associated protein RIF1 (2419 aa).

Disordered stretches follow at residues 1–24 (MTAP…VPPG) and 373–408 (SIPS…SPRG). The span at 373-385 (SIPSPQGNSSRGS) shows a compositional bias: polar residues. A phosphoserine mark is found at Ser385, Ser391, Ser779, Ser976, and Ser1005. Residue Thr1044 is modified to Phosphothreonine. The span at 1184–1198 (SSSTETSVVSSSSVS) shows a compositional bias: low complexity. Disordered stretches follow at residues 1184-1594 (SSST…QAVP) and 1613-1637 (RVIL…EKSK). Composition is skewed to polar residues over residues 1199 to 1217 (NATF…QTFI) and 1228 to 1255 (RPFS…TNTD). Phosphothreonine is present on Thr1215. Phosphoserine occurs at positions 1231 and 1233. The segment covering 1263 to 1272 (REVTNSKSDS) has biased composition (basic and acidic residues). Residues 1289 to 1302 (AEQSVTKKSKPSLT) show a composition bias toward polar residues. A compositionally biased stretch (basic and acidic residues) spans 1323–1345 (HVSENDDHPSEATLEHKDGDPKP). Residues Ser1407, Ser1439, Ser1457, and Ser1498 each carry the phosphoserine modification. A compositionally biased stretch (basic and acidic residues) spans 1416-1455 (SQERESGQQKKERRKEEEKIISKSPLRIKDDKLPTQKLTD). The segment covering 1457–1467 (SPIQENLTEKG) has biased composition (polar residues). Position 1504 is a phosphothreonine (Thr1504). The segment covering 1507–1516 (NLDKSSEKPL) has biased composition (basic and acidic residues). Over residues 1525–1537 (RRASQGLISAVEN) the composition is skewed to polar residues. Phosphoserine is present on residues Ser1528, Ser1538, Ser1540, Ser1542, and Ser1550. The segment covering 1551-1560 (RKKRSGKWKN) has biased composition (basic residues). Phosphoserine is present on residues Ser1562 and Ser1565. Over residues 1572-1581 (EEKKAEEEVM) the composition is skewed to basic and acidic residues. Phosphoserine is present on residues Ser1680 and Ser1683. A Phosphothreonine modification is found at Thr1780. A Phosphoserine modification is found at Ser1784. The interval 1812 to 1836 (ASEAVSEIQGPCSENHSPAEDPGLS) is disordered. Ser1842 bears the Phosphoserine mark. An interaction with condensed chromosomes in telophase region spans residues 1882–2419 (DAFVAADSEK…RWRSPAHENS (538 aa)). 2 disordered regions span residues 1890–1914 (EKST…ECEA) and 1929–1983 (FNSG…AQMS). Residues Ser1931, Ser2094, Ser2109, Ser2121, Ser2125, Ser2144, Ser2153, Ser2208, Ser2287, Ser2341, Ser2413, and Ser2419 each carry the phosphoserine modification. Positions 2119–2394 (VWSPLASPST…TGSQLFEMHE (276 aa)) are interaction with ERCC6. The disordered stretch occupies residues 2182-2212 (SPIIKSVKTSPTSHSKHNTTSAKGFLSPGSQ). A compositionally biased stretch (polar residues) spans 2189 to 2212 (KTSPTSHSKHNTTSAKGFLSPGSQ).

The protein belongs to the RIF1 family. As to quaternary structure, interacts with TP53BP1 (when phosphorylated by ATM). May interact with TRF2. Interacts with SHLD2. Interacts with ERCC6 (via WHD region). Interacts with ASTE1. As to expression, expressed in Sertoli cells, prospermatagonia, early primary spermatocytes, and in oocytes at all stages of their growth. Expressed in embryonic stem (ES) and embryonic germ (EG) cells: expression is lost upon differentiation.

Its subcellular location is the nucleus. The protein resides in the chromosome. It is found in the telomere. The protein localises to the cytoplasm. It localises to the cytoskeleton. Its subcellular location is the spindle. In terms of biological role, key regulator of TP53BP1 that plays a key role in the repair of double-strand DNA breaks (DSBs) in response to DNA damage: acts by promoting non-homologous end joining (NHEJ)-mediated repair of DSBs. In response to DNA damage, interacts with ATM-phosphorylated TP53BP1. Interaction with TP53BP1 leads to dissociate the interaction between NUDT16L1/TIRR and TP53BP1, thereby unmasking the tandem Tudor-like domain of TP53BP1 and allowing recruitment to DNA DSBs. Once recruited to DSBs, RIF1 and TP53BP1 act by promoting NHEJ-mediated repair of DSBs. In the same time, RIF1 and TP53BP1 specifically counteract the function of BRCA1 by blocking DSBs resection via homologous recombination (HR) during G1 phase. Also required for immunoglobulin class-switch recombination (CSR) during antibody genesis, a process that involves the generation of DNA DSBs. Promotes NHEJ of dysfunctional telomeres. The sequence is that of Telomere-associated protein RIF1 from Mus musculus (Mouse).